We begin with the raw amino-acid sequence, 252 residues long: Two-component response regulator ORR2 (252 aa).

The Response regulatory domain maps to 7 to 157; it reads RVLVVDDSPV…DVQRLRKCSG (151 aa). Asp-90 carries the post-translational modification 4-aspartylphosphate.

This sequence belongs to the ARR family. Type-A subfamily. Two-component system major event consists of a His-to-Asp phosphorelay between a sensor histidine kinase (HK) and a response regulator (RR). In plants, the His-to-Asp phosphorelay involves an additional intermediate named Histidine-containing phosphotransfer protein (HPt). This multistep phosphorelay consists of a His-Asp-His-Asp sequential transfer of a phosphate group between first a His and an Asp of the HK protein, followed by the transfer to a conserved His of the HPt protein and finally the transfer to an Asp in the receiver domain of the RR protein. As to expression, expressed in mature leaves and flowers, and at low levels in roots and shoots.

Functionally, functions as a response regulator involved in His-to-Asp phosphorelay signal transduction system. Phosphorylation of the Asp residue in the receiver domain activates the ability of the protein to promote the transcription of target genes. Type-A response regulators seem to act as negative regulators of the cytokinin signaling. The polypeptide is Two-component response regulator ORR2 (Oryza sativa subsp. indica (Rice)).